Reading from the N-terminus, the 630-residue chain is Adagio-like protein 1 (630 aa).

A disordered region spans residues 1–36 (MEWDSESDGAGSIGAGEEEEEEEEEEEGGFGGGGGG). Residues 16 to 28 (GEEEEEEEEEEEG) are compositionally biased toward acidic residues. A PAS domain is found at 48-127 (IEGMLRASGP…SEIRKCIDNG (80 aa)). Residue Cys-95 is modified to S-4a-FMN cysteine. The 47-residue stretch at 216 to 262 (SSLFQLTDEVLCQSILSRLSPRDIASVSSVCRRLYLLTRNEDLWRMV) folds into the F-box domain. Kelch repeat units follow at residues 378-428 (LLVV…TLDG), 430-481 (KLVV…VYGG), 483-535 (KILM…AGPP), and 549-601 (RVLI…VVGG).

Belongs to the ADAGIO family. FMN binds covalently to cysteine after exposure to blue light and is reversed in the dark.

It is found in the nucleus. The protein operates within protein modification; protein ubiquitination. Component of an E3 ubiquitin ligase complex that plays a central role in blue light-dependent circadian cycles. Acts as a blue light photoreceptor, due to the presence of FMN, that mediates light-regulated protein degradation of critical clock components by targeting them to the proteasome complex. The polypeptide is Adagio-like protein 1 (Oryza sativa subsp. japonica (Rice)).